The chain runs to 172 residues: Pre-intermoult gene 1 protein (172 aa).

The first 22 residues, 1-22 (MKLTKLWLLFVCLGLFVTLVVS), serve as a signal peptide directing secretion. A compositionally biased stretch (acidic residues) spans 25-45 (TDSDADSDSSADSDSSADSDE). Residues 25–172 (TDSDADSDSS…RRNNNSRRRG (148 aa)) are disordered. 3 tandem repeats follow at residues 27–32 (SDADSD), 33–38 (SSADSD), and 39–44 (SSADSD). Positions 27–44 (SDADSDSSADSDSSADSD) are 3 X 6 AA tandem repeats of S-S-A-D-S-D. The segment covering 55-77 (TSTTESSATNSSGSSDDASGSSS) has biased composition (low complexity). Over residues 78-95 (DVDDGSDDDTDSGSDTDY) the composition is skewed to acidic residues. Positions 104–172 (VKKRANRKKA…RRNNNSRRRG (69 aa)) are enriched in basic residues.

Low expression in first to third instar larvae salivary glands.

In Drosophila melanogaster (Fruit fly), this protein is Pre-intermoult gene 1 protein (Pig1).